The chain runs to 166 residues: RNA pyrophosphohydrolase (166 aa).

The Nudix hydrolase domain maps to 8–158 (PYRSCVGMML…KRPVYERVVK (151 aa)). The Nudix box signature appears at 47–68 (GGIDPGEDYWEAAQRELLEETN).

It belongs to the Nudix hydrolase family. RppH subfamily. A divalent metal cation is required as a cofactor.

Its function is as follows. Accelerates the degradation of transcripts by removing pyrophosphate from the 5'-end of triphosphorylated RNA, leading to a more labile monophosphorylated state that can stimulate subsequent ribonuclease cleavage. This chain is RNA pyrophosphohydrolase, found in Afipia carboxidovorans (strain ATCC 49405 / DSM 1227 / KCTC 32145 / OM5) (Oligotropha carboxidovorans).